The following is a 397-amino-acid chain: MQKKTLSDITIQGKRVLMRVDFNVPLDGNGEITDDKRIVEALPSIRKVLDNGGRLILMSHLGRPKGKVNPDFSLTPVALRLSELIDTPVIMAGDCIGTEVMQQALALQDGEVLLLENLRFHPEEEANDPEFSRELASLGEIYVNDAFGTAHRAHASTEGITHFVQTAVAGYLIEKELMYLGKALQSPERPFVAILGGSKISGKIDVIDNLFSKVDTVLVGGAMVFTFFKAQGLETGRSLVEDNKTELALELLAKAKSMGVRLILPEDVMAAPEISPDAPFHAVSVDQLAENEMGVDIGPKTAETYRKEILGAKTVLWNGPMGVFEIDNFAGGTIAVAEALAAATAKGATTIIGGGDSAAAVAKAGLADKMTHISTGGGASLEFLEGKELPGIAALNG.

Substrate-binding positions include aspartate 21–asparagine 23, arginine 37, histidine 60–arginine 63, arginine 119, and arginine 152. Residues lysine 203, glycine 294, glutamate 325, and glycine 354 to serine 357 each bind ATP.

The protein belongs to the phosphoglycerate kinase family. In terms of assembly, monomer.

It is found in the cytoplasm. The catalysed reaction is (2R)-3-phosphoglycerate + ATP = (2R)-3-phospho-glyceroyl phosphate + ADP. Its pathway is carbohydrate degradation; glycolysis; pyruvate from D-glyceraldehyde 3-phosphate: step 2/5. This Chlorobium luteolum (strain DSM 273 / BCRC 81028 / 2530) (Pelodictyon luteolum) protein is Phosphoglycerate kinase.